Reading from the N-terminus, the 137-residue chain is MEDKRVAMLVVMMLVMGNMLIEAEAVMSFKLCYGGCLVACALIAPPIKKLFCPFLCIKDCKRRPMLSFEANLNEIDQTGSYCELGCATDRCVSSSSIDDKGYYVNFSGIMWRKFHYAWIHAQKSAPTRTKIAIDFSL.

Positions 1–23 are cleaved as a signal peptide; sequence MEDKRVAMLVVMMLVMGNMLIEA.

It belongs to the plant thionin (TC 1.C.44) family. Post-translationally, is disulfide-linked.

It is found in the secreted. May be involved in plant defense. The sequence is that of Thionin-like protein 1 from Arabidopsis thaliana (Mouse-ear cress).